The sequence spans 1110 residues: Serine/threonine-protein kinase PknK (1110 aa).

The Protein kinase domain maps to 26–283 (FDNVEEIGRG…TAADVGEELR (258 aa)). ATP contacts are provided by residues 32-40 (IGRGGFGVV) and Lys55. Residue Arg148 is the Proton acceptor of the active site. 2 residues coordinate Mg(2+): Asn154 and Asp167. Residues 308–343 (RSPEAHAAHRHTGGGTPTVPTPPTPATKYRPSVPTG) form a disordered region.

This sequence belongs to the protein kinase superfamily. Ser/Thr protein kinase family.

The catalysed reaction is L-seryl-[protein] + ATP = O-phospho-L-seryl-[protein] + ADP + H(+). It catalyses the reaction L-threonyl-[protein] + ATP = O-phospho-L-threonyl-[protein] + ADP + H(+). The chain is Serine/threonine-protein kinase PknK (pknK) from Mycobacterium bovis (strain ATCC BAA-935 / AF2122/97).